Here is a 662-residue protein sequence, read N- to C-terminus: Probable protein phosphatase CG10417 (662 aa).

Residues 23-564 (AVGASSMQGW…DNMTAVIVQF (542 aa)) enclose the PPM-type phosphatase domain. Aspartate 57 and glycine 58 together coordinate Mn(2+). Disordered stretches follow at residues 219–275 (DGVA…FKHT) and 288–374 (GSND…DEDQ). 3 stretches are compositionally biased toward polar residues: residues 238-252 (DSNT…STKN), 261-275 (NDQN…FKHT), and 288-319 (GSND…INSS). Phosphoserine occurs at positions 289 and 306. Over residues 320–334 (QDDEFTDDDADYEEN) the composition is skewed to acidic residues. A compositionally biased stretch (polar residues) spans 337–347 (VKSPDTSSAES). Positions 349 to 374 (DCTENDDDGDEDGNEDSDEEETDEDQ) are enriched in acidic residues. Residues aspartate 506 and aspartate 555 each contribute to the Mn(2+) site. Positions 591–609 (VSHSLNDQSASKRCASQNA) are enriched in polar residues. A disordered region spans residues 591 to 662 (VSHSLNDQSA…KEVTIIVSSS (72 aa)). Residues serine 592, serine 594, and serine 599 each carry the phosphoserine modification. Basic and acidic residues predominate over residues 616–637 (LEKNNSKRLKTDLEQENIKDRT). Threonine 637 is subject to Phosphothreonine. Residues serine 639 and serine 641 each carry the phosphoserine modification.

It belongs to the PP2C family. Requires Mg(2+) as cofactor. Mn(2+) serves as cofactor.

It catalyses the reaction O-phospho-L-seryl-[protein] + H2O = L-seryl-[protein] + phosphate. The enzyme catalyses O-phospho-L-threonyl-[protein] + H2O = L-threonyl-[protein] + phosphate. The polypeptide is Probable protein phosphatase CG10417 (Drosophila melanogaster (Fruit fly)).